The sequence spans 2185 residues: Genome polyprotein (2185 aa).

A lipid anchor (N-myristoyl glycine; by host) is attached at G2. Over 2 to 1495 (GAQVSTQKTG…HVSRAFICLQ (1494 aa)) the chain is Cytoplasmic. Residues 568–584 (FFQGPVEDAITAAIGRV) are amphipathic alpha-helix. Catalysis depends on for protease 2A activity residues H872 and D890. C907 and C909 together coordinate Zn(2+). C961 serves as the catalytic For protease 2A activity. Residues C967 and H969 each contribute to the Zn(2+) site. A membrane-binding region spans residues 1101–1173 (NNGWLKKFTE…EQSAPSQSDQ (73 aa)). The segment at 1101-1239 (NNGWLKKFTE…SPGAGKSVAT (139 aa)) is oligomerization. Positions 1122–1126 (AIKIQ) are RNA-binding. The 157-residue stretch at 1205 to 1361 (EKKMSNYIQF…SMYSQNGKIN (157 aa)) folds into the SF3 helicase domain. The Zn(2+) site is built by C1369, C1381, and C1386. The C4-type; degenerate zinc finger occupies 1369–1386 (CDEECCPVNFKKCCPLVC). An RNA-binding region spans residues 1413–1420 (EYNHRHSV). The interval 1424 to 1429 (LEALFQ) is oligomerization. The stretch at 1496-1511 (AITTFVSVAGIIYIIY) is an intramembrane region. Residues 1512–2185 (KLFAGFQGAY…TIRRKWLDSF (674 aa)) are Cytoplasmic-facing. Y1521 is subject to O-(5'-phospho-RNA)-tyrosine. Positions 1541–1719 (GPAFEFAVAM…FSAALLKHYF (179 aa)) constitute a Peptidase C3 domain. Catalysis depends on for protease 3C activity residues H1580, E1611, and C1687. A RdRp catalytic domain is found at 1950–2066 (GHLIAFDYSG…SYPWPIDASL (117 aa)). D1956 and D2052 together coordinate Mg(2+).

It belongs to the picornaviruses polyprotein family. As to quaternary structure, interacts with capsid protein VP1 and capsid protein VP3 to form heterotrimeric protomers. Interacts with capsid protein VP0, and capsid protein VP3 to form heterotrimeric protomers. Five protomers subsequently associate to form pentamers which serve as building blocks for the capsid. Interacts with capsid protein VP2, capsid protein VP3 and capsid protein VP4 following cleavage of capsid protein VP0. Interacts with host CD55. Interacts with host CXADR. In terms of assembly, interacts with capsid protein VP1 and capsid protein VP3 in the mature capsid. As to quaternary structure, interacts with capsid protein VP0 and capsid protein VP1 to form heterotrimeric protomers. Five protomers subsequently associate to form pentamers which serve as building blocks for the capsid. Interacts with capsid protein VP4 in the mature capsid. Interacts with protein 2C; this interaction may be important for virion morphogenesis. Interacts with capsid protein VP1 and capsid protein VP3. In terms of assembly, homodimer. As to quaternary structure, homohexamer; forms a hexameric ring structure with 6-fold symmetry characteristic of AAA+ ATPases. Interacts (via N-terminus) with host RTN3 (via reticulon domain); this interaction is important for viral replication. Interacts with capsid protein VP3; this interaction may be important for virion morphogenesis. Interacts with protein 3CD. In terms of assembly, homodimer. Interacts with host GBF1. Interacts (via GOLD domain) with host ACBD3 (via GOLD domain); this interaction allows the formation of a viral protein 3A/ACBD3 heterotetramer with a 2:2 stoichiometry, which will stimulate the recruitment of host PI4KB in order to synthesize PI4P at the viral RNA replication sites. As to quaternary structure, interacts with RNA-directed RNA polymerase. Interacts with host TICAM1 (via C-terminus). In terms of assembly, interacts with protein 3AB and with RNA-directed RNA polymerase. As to quaternary structure, interacts with Viral protein genome-linked and with protein 3CD. The cofactor is Mg(2+). Specific enzymatic cleavages in vivo by the viral proteases yield processing intermediates and the mature proteins. In terms of processing, myristoylation is required for the formation of pentamers during virus assembly. Further assembly of 12 pentamers and a molecule of genomic RNA generates the provirion. Post-translationally, during virion maturation, immature virions are rendered infectious following cleavage of VP0 into VP4 and VP2. This maturation seems to be an autocatalytic event triggered by the presence of RNA in the capsid and it is followed by a conformational change infectious virion. Myristoylation is required during RNA encapsidation and formation of the mature virus particle. In terms of processing, VPg is uridylylated by the polymerase into VPg-pUpU. This acts as a nucleotide-peptide primer for the genomic RNA replication.

It is found in the virion. The protein resides in the host cytoplasm. It localises to the host cytoplasmic vesicle membrane. Its subcellular location is the host nucleus. It carries out the reaction a ribonucleoside 5'-triphosphate + H2O = a ribonucleoside 5'-diphosphate + phosphate + H(+). The catalysed reaction is Selective cleavage of Tyr-|-Gly bond in the picornavirus polyprotein.. The enzyme catalyses RNA(n) + a ribonucleoside 5'-triphosphate = RNA(n+1) + diphosphate. It catalyses the reaction Selective cleavage of Gln-|-Gly bond in the poliovirus polyprotein. In other picornavirus reactions Glu may be substituted for Gln, and Ser or Thr for Gly.. Replication or transcription is subject to high level of random mutations by the nucleotide analog ribavirin. Functionally, forms an icosahedral capsid of pseudo T=3 symmetry with capsid proteins VP2 and VP3. The capsid is 300 Angstroms in diameter, composed of 60 copies of each capsid protein and enclosing the viral positive strand RNA genome. Capsid protein VP1 mainly forms the vertices of the capsid. Capsid protein VP1 interacts with host cell receptors CD55 and CXADR to provide virion attachment to target host cells. This attachment induces virion internalization. Tyrosine kinases are probably involved in the entry process. After binding to its receptor, the capsid undergoes conformational changes. Capsid protein VP1 N-terminus (that contains an amphipathic alpha-helix) and capsid protein VP4 are externalized. Together, they shape a pore in the host membrane through which viral genome is translocated to host cell cytoplasm. In terms of biological role, forms an icosahedral capsid of pseudo T=3 symmetry with capsid proteins VP2 and VP3. The capsid is 300 Angstroms in diameter, composed of 60 copies of each capsid protein and enclosing the viral positive strand RNA genome. Lies on the inner surface of the capsid shell. After binding to the host receptor, the capsid undergoes conformational changes. Capsid protein VP4 is released, Capsid protein VP1 N-terminus is externalized, and together, they shape a pore in the host membrane through which the viral genome is translocated into the host cell cytoplasm. Its function is as follows. Component of immature procapsids, which is cleaved into capsid proteins VP4 and VP2 after maturation. Allows the capsid to remain inactive before the maturation step. Functionally, cysteine protease that cleaves viral polyprotein and specific host proteins. It is responsible for the autocatalytic cleavage between the P1 and P2 regions, which is the first cleavage occurring in the polyprotein. Also cleaves the host translation initiation factor EIF4G1, in order to shut down the capped cellular mRNA translation. Inhibits the host nucleus-cytoplasm protein and RNA trafficking by cleaving host members of the nuclear pores. Counteracts stress granule formation probably by antagonizing its assembly or promoting its dissassembly. Cleaves and inhibits host IFIH1/MDA5, thereby inhibiting the type-I IFN production and the establishment of the antiviral state. Cleaves and inhibits host MAVS, thereby inhibiting the type-I IFN production and the establishment of the antiviral state. In terms of biological role, plays an essential role in the virus replication cycle by acting as a viroporin. Creates a pore in the host endoplasmic reticulum and as a consequence releases Ca2+ in the cytoplasm of infected cell. In turn, high levels of cytoplasmic calcium may trigger membrane trafficking and transport of viral ER-associated proteins to viroplasms, sites of viral genome replication. Induces and associates with structural rearrangements of intracellular membranes. Displays RNA-binding, nucleotide binding and NTPase activities. May play a role in virion morphogenesis and viral RNA encapsidation by interacting with the capsid protein VP3. Its function is as follows. Localizes the viral replication complex to the surface of membranous vesicles. Together with protein 3CD binds the Cis-Active RNA Element (CRE) which is involved in RNA synthesis initiation. Acts as a cofactor to stimulate the activity of 3D polymerase, maybe through a nucleid acid chaperone activity. Functionally, localizes the viral replication complex to the surface of membranous vesicles. It inhibits host cell endoplasmic reticulum-to-Golgi apparatus transport and causes the disassembly of the Golgi complex, possibly through GBF1 interaction. This would result in depletion of MHC, trail receptors and IFN receptors at the host cell surface. Plays an essential role in viral RNA replication by recruiting ACBD3 and PI4KB at the viral replication sites, thereby allowing the formation of the rearranged membranous structures where viral replication takes place. In terms of biological role, acts as a primer for viral RNA replication and remains covalently bound to viral genomic RNA. VPg is uridylylated prior to priming replication into VPg-pUpU. The oriI viral genomic sequence may act as a template for this. The VPg-pUpU is then used as primer on the genomic RNA poly(A) by the RNA-dependent RNA polymerase to replicate the viral genome. During genome replication, the VPg-RNA linkage is removed by the host TDP2, thereby accelerating replication. During the late stage of the replication cycle, host TDP2 is excluded from sites of viral RNA synthesis and encapsidation, allowing for the generation of progeny virions. Involved in the viral replication complex and viral polypeptide maturation. It exhibits protease activity with a specificity and catalytic efficiency that is different from protease 3C. Protein 3CD lacks polymerase activity. Protein 3CD binds to the 5'UTR of the viral genome. Its function is as follows. Major viral protease that mediates proteolytic processing of the polyprotein. Cleaves host EIF5B, contributing to host translation shutoff. Also cleaves host PABPC1, contributing to host translation shutoff. Cleaves and inhibits host RIGI, thereby inhibiting the type-I IFN production and the establishment of the antiviral state. Cleaves and inhibits host MAVS, thereby inhibiting the type-I IFN production and the establishment of the antiviral state. Cleaves and inhibits host TICAM1/TRIF, thereby inhibiting the type-I IFN production. Cleaves host NLRP1, triggers host N-glycine-mediated degradation of the autoinhibitory NLRP1 N-terminal fragment. Functionally, replicates the viral genomic RNA on the surface of intracellular membranes. May form linear arrays of subunits that propagate along a strong head-to-tail interaction called interface-I. Covalently attaches UMP to a tyrosine of VPg, which is used to prime RNA synthesis. The positive stranded RNA genome is first replicated at virus induced membranous vesicles, creating a dsRNA genomic replication form. This dsRNA is then used as template to synthesize positive stranded RNA genomes. ss(+)RNA genomes are either translated, replicated or encapsidated. The chain is Genome polyprotein from Homo sapiens (Human).